Consider the following 688-residue polypeptide: Envelope glycoprotein gp70 (688 aa).

Positions 1-98 are cleaved as a signal peptide; sequence MPNHQSGSPT…SVLGPPPVSG (98 aa). Residues 99–624 are Extracellular-facing; the sequence is ESYWAYLPKP…ALNPLDWTQY (526 aa). 2 N-linked (GlcNAc...) asparagine; by host glycosylation sites follow: Asn127 and Asn143. Residues 426–474 are a coiled coil; sequence LLPVDIGDEPWFDDSAIQTFRYATDLIRAKRFVAAIILGISALIAIITS. A propeptide spanning residues 455–456 is cleaved from the precursor; the sequence is KR. A fusion peptide region spans residues 457–477; sequence FVAAIILGISALIAIITSFAV. Residues 463 to 481 are immunosuppression; that stretch reads LGISALIAIITSFAVATTA. Asn498 carries an N-linked (GlcNAc...) asparagine; by host glycan. A coiled-coil region spans residues 511–541; it reads LKLEARLNALEEVVLDLGQDVANLKTRMSTR. Residue Asn557 is glycosylated (N-linked (GlcNAc...) asparagine; by host). The helical transmembrane segment at 625–645 threads the bilayer; sequence FIFIGVGALLLVIVLMIFPIV. Residues 646–688 lie on the Cytoplasmic side of the membrane; it reads FQCLAKSLDQVQSDLNVLLLKKKKGGNAAPAAEMVELPRVSYT.

As to quaternary structure, the mature envelope protein (Env) consists of a trimer of SU-TM heterodimers attached by non-covalent interactions or by a labile interchain disulfide bond. Specific enzymatic cleavages in vivo yield mature proteins. Envelope glycoproteins are synthesized as an inactive precursor that is N-glycosylated and processed likely by host cell furin or by a furin-like protease in the Golgi to yield the mature SU and TM proteins. The cleavage site between SU and TM requires the minimal sequence [KR]-X-[KR]-R.

Its subcellular location is the virion membrane. It is found in the host cell membrane. Its function is as follows. The surface protein (SU) attaches the virus to the host cell by binding to its receptor. This interaction triggers the refolding of the transmembrane protein (TM) and is thought to activate its fusogenic potential by unmasking its fusion peptide. Fusion occurs at the host cell plasma membrane. The transmembrane protein (TM) acts as a class I viral fusion protein. Under the current model, the protein has at least 3 conformational states: pre-fusion native state, pre-hairpin intermediate state, and post-fusion hairpin state. During viral and target cell membrane fusion, the coiled coil regions (heptad repeats) assume a trimer-of-hairpins structure, positioning the fusion peptide in close proximity to the C-terminal region of the ectodomain. The formation of this structure appears to drive apposition and subsequent fusion of viral and target cell membranes. Membranes fusion leads to delivery of the nucleocapsid into the cytoplasm. This is Envelope glycoprotein gp70 (env) from Mouse mammary tumor virus (strain C3H) (MMTV).